The primary structure comprises 239 residues: MYYCNGENCNQTDSAKEKGHPRHLIPELCRQFYNLGWVTGTGGGISMKHGEEIYIAPSGVQKERIQPDDLFVCDIDERDISCPPPYKNLKKSQCTPLFMNAYTLRGAGAVIHTHSKSAVLATLLFPGKEFRITHQEMIKGIKKGSSGDYYRYDDLLVVPIVENTPEEKDLKDRMARAMTEYPDSCAVLVRRHGVYVWGDTWEKAKTMCECYDYLFDIAVQMKQLGLDPAAHPAEEKGIV.

A substrate-binding site is contributed by Cys-94. 2 residues coordinate Zn(2+): His-112 and His-114. The Proton donor/acceptor role is filled by Glu-136. His-192 lines the Zn(2+) pocket.

This sequence belongs to the aldolase class II family. MtnB subfamily. Zn(2+) serves as cofactor.

The protein resides in the cytoplasm. The catalysed reaction is 5-(methylsulfanyl)-D-ribulose 1-phosphate = 5-methylsulfanyl-2,3-dioxopentyl phosphate + H2O. It functions in the pathway amino-acid biosynthesis; L-methionine biosynthesis via salvage pathway; L-methionine from S-methyl-5-thio-alpha-D-ribose 1-phosphate: step 2/6. Its function is as follows. Catalyzes the dehydration of methylthioribulose-1-phosphate (MTRu-1-P) into 2,3-diketo-5-methylthiopentyl-1-phosphate (DK-MTP-1-P). Functions in the methionine salvage pathway. May play a role in apoptosis. This Aquarana catesbeiana (American bullfrog) protein is Methylthioribulose-1-phosphate dehydratase.